A 62-amino-acid polypeptide reads, in one-letter code: Large ribosomal subunit protein uL29 (62 aa).

This sequence belongs to the universal ribosomal protein uL29 family.

The sequence is that of Large ribosomal subunit protein uL29 from Geobacter sulfurreducens (strain ATCC 51573 / DSM 12127 / PCA).